A 296-amino-acid polypeptide reads, in one-letter code: Maltose/maltodextrin transport system permease protein MalG (296 aa).

Over 1–12 the chain is Cytoplasmic; the sequence is MAMVQPKSQKLR. Residues 13–35 traverse the membrane as a helical segment; that stretch reads LLITHLGLLIFIAAIMFPLLMVI. The Periplasmic segment spans residues 36–88; it reads AISLREGNFATGSLIPDKISWEHWRLALGFSVEHADGRVTPPPFPVLLWLWNS. The ABC transmembrane type-1 domain maps to 85-281; that stretch reads LWNSVKIAGI…IPITLVFLLA (197 aa). A helical transmembrane segment spans residues 89–111; sequence VKIAGITAIGIVALSTTCAYAFA. At 112-123 the chain is on the cytoplasmic side; the sequence is RMRFPGKATLLK. Residues 124 to 143 traverse the membrane as a helical segment; the sequence is GMLIFQMFPAVLSLVALYAL. At 144–152 the chain is on the periplasmic side; that stretch reads FDRLGQYIP. The chain crosses the membrane as a helical span at residues 153-175; sequence FIGLNTHGGVIFAYLGGIALHVW. The Cytoplasmic segment spans residues 176–204; it reads TIKGYFETIDSSLEEAAALDGATPWQAFR. A helical membrane pass occupies residues 205–227; the sequence is LVLLPLSVPILAVVFILSFIAAI. The Periplasmic portion of the chain corresponds to 228–257; that stretch reads TEVPVASLLLRDVDSYTLAVGMQQYLNPQN. The helical transmembrane segment at 258 to 280 threads the bilayer; it reads YLWGDFAAAAVLSAIPITLVFLL. At 281–296 the chain is on the cytoplasmic side; that stretch reads AQRWLVNGLTAGGVKG.

Belongs to the binding-protein-dependent transport system permease family. MalFG subfamily. As to quaternary structure, the complex is composed of two ATP-binding proteins (MalK), two transmembrane proteins (MalG and MalF) and a solute-binding protein (MalE).

Its subcellular location is the cell inner membrane. In terms of biological role, part of the ABC transporter complex MalEFGK involved in maltose/maltodextrin import. Probably responsible for the translocation of the substrate across the membrane. This Salmonella typhimurium (strain LT2 / SGSC1412 / ATCC 700720) protein is Maltose/maltodextrin transport system permease protein MalG (malG).